Consider the following 211-residue polypeptide: Somatotropin (211 aa).

The N-terminal stretch at 1–23 is a signal peptide; sequence MASGFLLCPVLLAVFFMSPVEVG. His-40 is a binding site for Zn(2+). Cys-73 and Cys-184 are disulfide-bonded. Residue Glu-193 coordinates Zn(2+). An intrachain disulfide couples Cys-201 to Cys-209.

This sequence belongs to the somatotropin/prolactin family.

Its subcellular location is the secreted. Functionally, growth hormone plays an important role in growth control and is involved in the regulation of several anabolic processes. Implicated as an osmoregulatory substance important for seawater adaptation. In Lepisosteus osseus (Long-nosed gar), this protein is Somatotropin (gh).